The primary structure comprises 91 residues: Potassium channel toxin TtrKIK (91 aa).

Positions 1–25 (MVATNRCCVFALLFALLLVHSLTEA) are cleaved as a signal peptide. Residues 26 to 44 (GKGKEVLGKIKDKLIEAKD) constitute a propeptide that is removed on maturation. Residues 58-91 (EYACPAIEKFCEDHCAAKKAVGKCDDFKCNCIKL) enclose the BetaSPN-type CS-alpha/beta domain. Disulfide bonds link Cys61–Cys81, Cys68–Cys86, and Cys72–Cys88.

Belongs to the long chain scorpion toxin family. Class 2 subfamily. In terms of tissue distribution, expressed by the venom gland.

It localises to the secreted. Functionally, the full peptide presents antibacterial and cytotoxic activities. The synthetic C-terminus (AA 33-76) inhibits voltage-gated potassium channels Kv1.1/KCNA1, Kv1.2/KCNA2, and Kv1.3/KCNA3. In Tityus trivittatus (Argentinean scorpion), this protein is Potassium channel toxin TtrKIK.